We begin with the raw amino-acid sequence, 115 residues long: SOSS complex subunit C homolog (115 aa).

This sequence belongs to the SOSS-C family.

The sequence is that of SOSS complex subunit C homolog from Drosophila grimshawi (Hawaiian fruit fly).